A 247-amino-acid chain; its full sequence is 2,3-bisphosphoglycerate-dependent phosphoglycerate mutase (247 aa).

Substrate is bound by residues 8 to 15 (RHGESVWN), 21 to 22 (TG), Arg-60, 87 to 90 (ERHY), Lys-98, 114 to 115 (RR), and 183 to 184 (GN). His-9 acts as the Tele-phosphohistidine intermediate in catalysis. Catalysis depends on Glu-87, which acts as the Proton donor/acceptor.

Belongs to the phosphoglycerate mutase family. BPG-dependent PGAM subfamily. As to quaternary structure, homodimer.

The enzyme catalyses (2R)-2-phosphoglycerate = (2R)-3-phosphoglycerate. It functions in the pathway carbohydrate degradation; glycolysis; pyruvate from D-glyceraldehyde 3-phosphate: step 3/5. Catalyzes the interconversion of 2-phosphoglycerate and 3-phosphoglycerate. The protein is 2,3-bisphosphoglycerate-dependent phosphoglycerate mutase of Geobacter sulfurreducens (strain ATCC 51573 / DSM 12127 / PCA).